The following is a 525-amino-acid chain: MEYDLTKQICSFLDAHMMLPLINYLKDTQQYQENEINKAMADILSQTGCCDYAINAYESIGRDTAPLQAKKQELVGELNKLKEQCSFVTQYIESKKQQKEQQKELKEQQKEQQKEKDTDKTTPTTTDETTTTTTTAPTTTTTTTTTTITPITVIPFSQLLEKITPEILDSIYRFSKLLFEIGQYGSAREHLEIFLQLSPTHQNKDKRLSALWGILESDILSLNWGQAVGDISPLQDQIDSNGTPVEQLGQRAWLIHRALFVYFYNPESRSSLVDLLLEDKYLNAIQTTCPHILRYLAVAIIVNKKKQQSNVFQRILNALVRVVEQEAYVYRDPITQFISSLFVKFNFEDAQAQLILCEKVLKNDFFLNTCVDEFMENARVCVFETYCNILESIDIDMLCKNLRIDPESSEKWIVEAIRNTRFSAKIDSANNQIKMFTQHNSYRQVMDKTKALFNRGIEMVVGINESRSQQNRKGGDNRKNQRGQNRNQQNQQNQQSNESNETTTTTTTAAAATTTTTTTATPTSA.

Positions 102–120 (QKELKEQQKEQQKEKDTDK) are enriched in basic and acidic residues. The interval 102-143 (QKELKEQQKEQQKEKDTDKTTPTTTDETTTTTTTAPTTTTTT) is disordered. The segment covering 121-143 (TTPTTTDETTTTTTTAPTTTTTT) has biased composition (low complexity). The PCI domain maps to 261–440 (VYFYNPESRS…NQIKMFTQHN (180 aa)). The disordered stretch occupies residues 463–525 (INESRSQQNR…TTTTATPTSA (63 aa)). The segment covering 482–525 (RGQNRNQQNQQNQQSNESNETTTTTTTAAAATTTTTTTATPTSA) has biased composition (low complexity).

Belongs to the eIF-3 subunit E family. As to quaternary structure, component of the eukaryotic translation initiation factor 3 (eIF-3) complex.

It localises to the cytoplasm. Component of the eukaryotic translation initiation factor 3 (eIF-3) complex, which is involved in protein synthesis of a specialized repertoire of mRNAs and, together with other initiation factors, stimulates binding of mRNA and methionyl-tRNAi to the 40S ribosome. The eIF-3 complex specifically targets and initiates translation of a subset of mRNAs involved in cell proliferation. The polypeptide is Eukaryotic translation initiation factor 3 subunit E (eif3E) (Dictyostelium discoideum (Social amoeba)).